The primary structure comprises 299 residues: Probable alpha-L-glutamate ligase 2 (299 aa).

The region spanning 104-287 (MQLMSRRGIG…VAGAIIEFVE (184 aa)) is the ATP-grasp domain. ATP contacts are provided by residues K141, 178 to 179 (EY), D187, and 211 to 213 (RSN). 3 residues coordinate Mg(2+): D248, E260, and N262. 3 residues coordinate Mn(2+): D248, E260, and N262.

Belongs to the RimK family. Requires Mg(2+) as cofactor. Mn(2+) is required as a cofactor.

The chain is Probable alpha-L-glutamate ligase 2 from Shewanella sp. (strain MR-4).